The following is a 187-amino-acid chain: ATP synthase subunit b, chloroplastic (187 aa).

Residues 34–56 traverse the membrane as a helical segment; the sequence is IINLSVVLGLVFTLGRNFLISLL.

Belongs to the ATPase B chain family. In terms of assembly, F-type ATPases have 2 components, F(1) - the catalytic core - and F(0) - the membrane proton channel. F(1) has five subunits: alpha(3), beta(3), gamma(1), delta(1), epsilon(1). F(0) has four main subunits: a(1), b(1), b'(1) and c(10-14). The alpha and beta chains form an alternating ring which encloses part of the gamma chain. F(1) is attached to F(0) by a central stalk formed by the gamma and epsilon chains, while a peripheral stalk is formed by the delta, b and b' chains.

The protein resides in the plastid. It is found in the chloroplast thylakoid membrane. In terms of biological role, f(1)F(0) ATP synthase produces ATP from ADP in the presence of a proton or sodium gradient. F-type ATPases consist of two structural domains, F(1) containing the extramembraneous catalytic core and F(0) containing the membrane proton channel, linked together by a central stalk and a peripheral stalk. During catalysis, ATP synthesis in the catalytic domain of F(1) is coupled via a rotary mechanism of the central stalk subunits to proton translocation. Functionally, component of the F(0) channel, it forms part of the peripheral stalk, linking F(1) to F(0). The protein is ATP synthase subunit b, chloroplastic of Pleurastrum terricola (Filamentous green alga).